We begin with the raw amino-acid sequence, 398 residues long: 1-deoxy-D-xylulose 5-phosphate reductoisomerase (398 aa).

6 residues coordinate NADPH: T10, G11, S12, I13, N38, and N124. K125 is a 1-deoxy-D-xylulose 5-phosphate binding site. E126 is a binding site for NADPH. A Mn(2+)-binding site is contributed by D150. Positions 151, 152, 176, and 199 each coordinate 1-deoxy-D-xylulose 5-phosphate. A Mn(2+)-binding site is contributed by E152. Residue G205 coordinates NADPH. Residues S212, N217, K218, and E221 each contribute to the 1-deoxy-D-xylulose 5-phosphate site. E221 contacts Mn(2+).

It belongs to the DXR family. Mg(2+) serves as cofactor. Mn(2+) is required as a cofactor.

The catalysed reaction is 2-C-methyl-D-erythritol 4-phosphate + NADP(+) = 1-deoxy-D-xylulose 5-phosphate + NADPH + H(+). Its pathway is isoprenoid biosynthesis; isopentenyl diphosphate biosynthesis via DXP pathway; isopentenyl diphosphate from 1-deoxy-D-xylulose 5-phosphate: step 1/6. Its function is as follows. Catalyzes the NADPH-dependent rearrangement and reduction of 1-deoxy-D-xylulose-5-phosphate (DXP) to 2-C-methyl-D-erythritol 4-phosphate (MEP). This is 1-deoxy-D-xylulose 5-phosphate reductoisomerase from Crocosphaera subtropica (strain ATCC 51142 / BH68) (Cyanothece sp. (strain ATCC 51142)).